Here is a 446-residue protein sequence, read N- to C-terminus: Tubulin beta-2 chain (446 aa).

The GTP site is built by Gln-11, Glu-69, Ser-138, Gly-142, Thr-143, Gly-144, Asn-204, and Asn-226. Glu-69 contacts Mg(2+). Positions 424-446 (QYQEATADEEGEFDEDEEGGGDE) are disordered. Over residues 429–446 (TADEEGEFDEDEEGGGDE) the composition is skewed to acidic residues.

Belongs to the tubulin family. In terms of assembly, dimer of alpha and beta chains. A typical microtubule is a hollow water-filled tube with an outer diameter of 25 nm and an inner diameter of 15 nM. Alpha-beta heterodimers associate head-to-tail to form protofilaments running lengthwise along the microtubule wall with the beta-tubulin subunit facing the microtubule plus end conferring a structural polarity. Microtubules usually have 13 protofilaments but different protofilament numbers can be found in some organisms and specialized cells. Requires Mg(2+) as cofactor.

It localises to the cytoplasm. The protein localises to the cytoskeleton. In terms of biological role, tubulin is the major constituent of microtubules, a cylinder consisting of laterally associated linear protofilaments composed of alpha- and beta-tubulin heterodimers. Microtubules grow by the addition of GTP-tubulin dimers to the microtubule end, where a stabilizing cap forms. Below the cap, tubulin dimers are in GDP-bound state, owing to GTPase activity of alpha-tubulin. The sequence is that of Tubulin beta-2 chain (betaTub85D) from Drosophila erecta (Fruit fly).